A 290-amino-acid polypeptide reads, in one-letter code: Fat storage-inducing transmembrane protein 1 (290 aa).

Helical transmembrane passes span 1-21 (MFLN…LGNT), 26-46 (HFHL…LWVS), 65-85 (SGWG…SFSV), 173-193 (LLLC…GPYL), and 205-225 (ILFL…LCLL).

This sequence belongs to the FIT family. FIT1 subfamily.

The protein resides in the endoplasmic reticulum membrane. May play an important role in the formation of lipid droplets (LDs) which are storage organelles at the center of lipid and energy homeostasis. May directly bind to diacylglycerol (DAGs) and triacylglycerol. This Danio rerio (Zebrafish) protein is Fat storage-inducing transmembrane protein 1 (fitm1l).